Reading from the N-terminus, the 429-residue chain is SVP1-like protein 2 (429 aa).

WD repeat units follow at residues 10–48, 50–96, 178–218, and 223–262; these read PVLAPVLSVTFNHDNSCFAVGLDHGFRIYESGSCVLRTS, DFGA…QVGV, AHTS…RLYE, and IDKAIIFSIGFSPSGKYLACTSDKSTLHVFDVTRPGGTRP. Residues 262–297 are disordered; that stretch reads PITSNGGTAYAAGEPSVTGNNRPSSPYSVASSSGGG.

This sequence belongs to the WD repeat PROPPIN family.

Its subcellular location is the vacuole membrane. The protein localises to the cytoplasmic vesicle membrane. In terms of biological role, involved in mitochondrial or peroxisomal functions and amino acid signaling pathways. The polypeptide is SVP1-like protein 2 (apg-14) (Neurospora crassa (strain ATCC 24698 / 74-OR23-1A / CBS 708.71 / DSM 1257 / FGSC 987)).